Consider the following 177-residue polypeptide: ATP synthase subunit delta (177 aa).

Belongs to the ATPase delta chain family. As to quaternary structure, F-type ATPases have 2 components, F(1) - the catalytic core - and F(0) - the membrane proton channel. F(1) has five subunits: alpha(3), beta(3), gamma(1), delta(1), epsilon(1). F(0) has three main subunits: a(1), b(2) and c(10-14). The alpha and beta chains form an alternating ring which encloses part of the gamma chain. F(1) is attached to F(0) by a central stalk formed by the gamma and epsilon chains, while a peripheral stalk is formed by the delta and b chains.

It localises to the cell inner membrane. Its function is as follows. F(1)F(0) ATP synthase produces ATP from ADP in the presence of a proton or sodium gradient. F-type ATPases consist of two structural domains, F(1) containing the extramembraneous catalytic core and F(0) containing the membrane proton channel, linked together by a central stalk and a peripheral stalk. During catalysis, ATP synthesis in the catalytic domain of F(1) is coupled via a rotary mechanism of the central stalk subunits to proton translocation. In terms of biological role, this protein is part of the stalk that links CF(0) to CF(1). It either transmits conformational changes from CF(0) to CF(1) or is implicated in proton conduction. This Haemophilus ducreyi (strain 35000HP / ATCC 700724) protein is ATP synthase subunit delta.